The chain runs to 130 residues: Small ribosomal subunit protein uS9 (130 aa).

Belongs to the universal ribosomal protein uS9 family.

The protein is Small ribosomal subunit protein uS9 of Tolumonas auensis (strain DSM 9187 / NBRC 110442 / TA 4).